We begin with the raw amino-acid sequence, 618 residues long: Membrane protein insertase YidC (618 aa).

6 consecutive transmembrane segments (helical) span residues 3–23 (KNTITGLVLIGILLVGFSFLS), 363–383 (WGLSMGIVLLLLTIMVKIVVF), 439–459 (LPMLLQFPILMALFMFVPSAI), 478–498 (FITFPFHIPFLGNHLSLFCLL), 520–540 (PQMAAMKWMMYLMPIMFLFVL), and 545–565 (SGLNYYYFISTLISVVTMIIL).

It belongs to the OXA1/ALB3/YidC family. Type 1 subfamily. Interacts with the Sec translocase complex via SecD. Specifically interacts with transmembrane segments of nascent integral membrane proteins during membrane integration.

It localises to the cell inner membrane. Its function is as follows. Required for the insertion and/or proper folding and/or complex formation of integral membrane proteins into the membrane. Involved in integration of membrane proteins that insert both dependently and independently of the Sec translocase complex, as well as at least some lipoproteins. Aids folding of multispanning membrane proteins. The chain is Membrane protein insertase YidC from Bacteroides fragilis (strain ATCC 25285 / DSM 2151 / CCUG 4856 / JCM 11019 / LMG 10263 / NCTC 9343 / Onslow / VPI 2553 / EN-2).